The following is a 718-amino-acid chain: Polyphosphate kinase (718 aa).

An ATP-binding site is contributed by Asn47. Arg372 and Arg402 together coordinate Mg(2+). The active-site Phosphohistidine intermediate is the His432. Residues Tyr465, Arg561, and His589 each coordinate ATP. The segment at 683 to 718 is disordered; that stretch reads KADHGDTTPTSNAHQFIPMMSPKNEPDASDLDREDD. The segment covering 709–718 has biased composition (acidic residues); sequence DASDLDREDD.

The protein belongs to the polyphosphate kinase 1 (PPK1) family. Mg(2+) serves as cofactor. Post-translationally, an intermediate of this reaction is the autophosphorylated ppk in which a phosphate is covalently linked to a histidine residue through a N-P bond.

It carries out the reaction [phosphate](n) + ATP = [phosphate](n+1) + ADP. Its function is as follows. Catalyzes the reversible transfer of the terminal phosphate of ATP to form a long-chain polyphosphate (polyP). The sequence is that of Polyphosphate kinase from Lactiplantibacillus plantarum (strain ATCC BAA-793 / NCIMB 8826 / WCFS1) (Lactobacillus plantarum).